The primary structure comprises 347 residues: Methylthioribose-1-phosphate isomerase (347 aa).

Substrate contacts are provided by residues 46–48 (RGA), Arg-89, and Gln-196. Asp-237 serves as the catalytic Proton donor. Residue 247–248 (NK) participates in substrate binding.

This sequence belongs to the eIF-2B alpha/beta/delta subunits family. MtnA subfamily.

It carries out the reaction 5-(methylsulfanyl)-alpha-D-ribose 1-phosphate = 5-(methylsulfanyl)-D-ribulose 1-phosphate. It functions in the pathway amino-acid biosynthesis; L-methionine biosynthesis via salvage pathway; L-methionine from S-methyl-5-thio-alpha-D-ribose 1-phosphate: step 1/6. Functionally, catalyzes the interconversion of methylthioribose-1-phosphate (MTR-1-P) into methylthioribulose-1-phosphate (MTRu-1-P). This Chloroflexus aurantiacus (strain ATCC 29366 / DSM 635 / J-10-fl) protein is Methylthioribose-1-phosphate isomerase.